Consider the following 377-residue polypeptide: MTDSPVLALTKDLISRQSVTPEDAGCQDVMIARLEALGFTIERMVFEDTTNFWARRGTQAPLFAFAGHTDVVPAGKLEHWHTPPFEPTEKEGYLYGRGAADMKGSLAAMIVATERFIAEHPDHQGSIGFLITSDEEGPFINGTVRVVETLMARDENIDMCIVGEPSSTEVVGDVVKNGRRGSITGDLTVKGTQGHVAYPHLADNPVHKSLLAIHALATTEWDKGNEYFPPTSFQIPNVQAGTGASNVIPGEFHVQFNLRFSTELCNERIVERVTQTLDQHDLNYDLKWTYNGDPFLTDTGALLDAVVDAVDSVNQTKPALLTTGGTSDGRFIARMGGQVVELGPVNATIHKVNECVKIDDLEKLTDMYQKTLENLLA.

His-68 serves as a coordination point for Zn(2+). Residue Asp-70 is part of the active site. Residue Asp-101 participates in Zn(2+) binding. Residue Glu-135 is the Proton acceptor of the active site. Residues Glu-136, Glu-164, and His-350 each contribute to the Zn(2+) site.

It belongs to the peptidase M20A family. DapE subfamily. In terms of assembly, homodimer. The cofactor is Zn(2+). It depends on Co(2+) as a cofactor.

The catalysed reaction is N-succinyl-(2S,6S)-2,6-diaminopimelate + H2O = (2S,6S)-2,6-diaminopimelate + succinate. It functions in the pathway amino-acid biosynthesis; L-lysine biosynthesis via DAP pathway; LL-2,6-diaminopimelate from (S)-tetrahydrodipicolinate (succinylase route): step 3/3. Its function is as follows. Catalyzes the hydrolysis of N-succinyl-L,L-diaminopimelic acid (SDAP), forming succinate and LL-2,6-diaminopimelate (DAP), an intermediate involved in the bacterial biosynthesis of lysine and meso-diaminopimelic acid, an essential component of bacterial cell walls. In Vibrio vulnificus (strain CMCP6), this protein is Succinyl-diaminopimelate desuccinylase.